The primary structure comprises 180 residues: Large ribosomal subunit protein uL5 (180 aa).

Belongs to the universal ribosomal protein uL5 family. Part of the 50S ribosomal subunit; part of the 5S rRNA/L5/L18/L25 subcomplex. Contacts the 5S rRNA and the P site tRNA. Forms a bridge to the 30S subunit in the 70S ribosome.

Functionally, this is one of the proteins that bind and probably mediate the attachment of the 5S RNA into the large ribosomal subunit, where it forms part of the central protuberance. In the 70S ribosome it contacts protein S13 of the 30S subunit (bridge B1b), connecting the 2 subunits; this bridge is implicated in subunit movement. Contacts the P site tRNA; the 5S rRNA and some of its associated proteins might help stabilize positioning of ribosome-bound tRNAs. This Streptococcus agalactiae serotype Ia (strain ATCC 27591 / A909 / CDC SS700) protein is Large ribosomal subunit protein uL5.